A 416-amino-acid polypeptide reads, in one-letter code: UDP-N-acetylmuramoylalanine--D-glutamate ligase (416 aa).

108-114 (GTVGKTT) provides a ligand contact to ATP.

It belongs to the MurCDEF family.

The protein localises to the cytoplasm. The enzyme catalyses UDP-N-acetyl-alpha-D-muramoyl-L-alanine + D-glutamate + ATP = UDP-N-acetyl-alpha-D-muramoyl-L-alanyl-D-glutamate + ADP + phosphate + H(+). It participates in cell wall biogenesis; peptidoglycan biosynthesis. Its function is as follows. Cell wall formation. Catalyzes the addition of glutamate to the nucleotide precursor UDP-N-acetylmuramoyl-L-alanine (UMA). In Chlamydia muridarum (strain MoPn / Nigg), this protein is UDP-N-acetylmuramoylalanine--D-glutamate ligase.